A 655-amino-acid polypeptide reads, in one-letter code: Epithelial sodium channel subunit gamma (655 aa).

At 1–55 the chain is on the cytoplasmic side; that stretch reads MAPGEKIKAKIKKNLPVRGPQAPTIKDLMHWYCLNTNTHGCRRIVVSRGRLRRLL. A helical transmembrane segment spans residues 56–76; sequence WIAFTLTAVALIIWQCALLVF. At 77 to 547 the chain is on the extracellular side; it reads SFYTVSVSIK…GGQLGLWMSC (471 aa). Cystine bridges form between C100–C289, C213–C220, C266–C273, C378–C463, C400–C459, C404–C455, C413–C440, and C415–C429. Residues 140–227 form a gating release of inhibition by proteolysis (GRIP); protease-sensitive region that is responsible for the proteolytic activation of the channel region; the sequence is RKRREAGSMR…SDCATYTFSS (88 aa). N215 carries N-linked (GlcNAc...) asparagine glycosylation. A glycan (N-linked (GlcNAc...) asparagine) is linked at N277. An N-linked (GlcNAc...) asparagine glycan is attached at N503. A helical membrane pass occupies residues 548–568; it reads SVVCVIEIIEVFFIDFFSIIA. The Cytoplasmic segment spans residues 569 to 655; sequence RRQWQKAKDW…LTDTQLTNEF (87 aa). A disordered region spans residues 582–636; that stretch reads RRTPPSTETPSSQQGQDNPALDTDDDLPTFTSAMRLPPAPEAPVPGTPPPRYNTL. The segment covering 585–598 has biased composition (polar residues); the sequence is PPSTETPSSQQGQD. Residues 618-632 show a composition bias toward pro residues; it reads PPAPEAPVPGTPPPR. Residues 629 to 633 carry the PY motif; recruits WW domain-containing proteins and is thereby required for ubiquitination and inhibition of the channel by NEDD4 and NEDD4L motif; it reads PPPRY.

This sequence belongs to the amiloride-sensitive sodium channel (TC 1.A.6) family. SCNN1G subfamily. Component of the heterotrimeric epithelial sodium channel (ENaC) composed of an alpha/SCNN1A, a beta/SCNN1B and a gamma/SCNN1G subunit. Interacts with WWP1 (via WW domains). Interacts with WWP2 (via WW domains); inhibits the channel. Interacts with the full-length immature form of PCSK9 (pro-PCSK9); inhibits ENaC by promoting its proteasomal degradation. Interacts with BPIFA1; the interaction is indirect via SCNN1B and inhibits the proteolytic maturation of SCNN1A and SCNN1G and the activation of ENaC. In terms of processing, phosphorylated on serine and threonine residues. Aldosterone and insulin increase the basal level of phosphorylation. Post-translationally, ubiquitinated. Can be ubiquitinated at multiple sites and undergo monoubiquitination and polyubiquitination. Ubiquitination by NEDD4 or NEDD4L inhibits the ENaC channel through endocytosis, intracellular retention and degradation of its individual subunits. ENaC is activated through the proteolytic maturation of its subunits. Furin cleaves the SCNN1G subunit first, followed by cleavage by prostasin (PRSS8), which results in a stepwise increase in the open probability of the channel due to the release of an inhibitory tract. BPIFA1, which is recruited by the SCNN1B subunit, prevents the proteolytic activation of ENaC. In terms of processing, N-glycosylated. N-linked glycans are processed to complex type during ENaC complex assembly and transport to the plasma membrane. As to expression, lung and kidney.

It is found in the apical cell membrane. The enzyme catalyses Na(+)(in) = Na(+)(out). Its activity is regulated as follows. Originally identified and characterized by its inhibition by the diuretic drug amiloride. Functionally, this is one of the three pore-forming subunits of the heterotrimeric epithelial sodium channel (ENaC), a critical regulator of sodium balance and fluid homeostasis. ENaC operates in epithelial tissues, where it mediates the electrodiffusion of sodium ions from extracellular fluid through the apical membrane of cells, with water following osmotically. It plays a key role in maintaining sodium homeostasis through electrogenic sodium reabsorption in the kidneys. Additionally, ENaC is essential for airway surface liquid homeostasis, which is crucial for proper mucus clearance. The protein is Epithelial sodium channel subunit gamma of Mus musculus (Mouse).